The primary structure comprises 315 residues: Protein translocase subunit SecF (315 aa).

Helical transmembrane passes span 12-32, 136-156, 166-186, 188-208, 247-267, and 271-291; these read AWIVSSLLVLISIFAMAISWA, ALFRSGVLALVISLLGIIIYL, VFAIIALLYDALITMGAFAIF, LVGGVEVDSLFLVALLTIIGF, SINTSLTTSLPLVAIFLFGGD, and FFALALIIGFASGVYSSIFMA.

Belongs to the SecD/SecF family. SecF subfamily. In terms of assembly, forms a complex with SecD. Part of the essential Sec protein translocation apparatus which comprises SecA, SecYEG and auxiliary proteins SecDF. Other proteins may also be involved.

It localises to the cell inner membrane. In terms of biological role, part of the Sec protein translocase complex. Interacts with the SecYEG preprotein conducting channel. SecDF uses the proton motive force (PMF) to complete protein translocation after the ATP-dependent function of SecA. Its function is as follows. Probably participates in protein translocation into and across both the cytoplasmic and thylakoid membranes in cyanobacterial cells. This is Protein translocase subunit SecF from Synechocystis sp. (strain ATCC 27184 / PCC 6803 / Kazusa).